The primary structure comprises 298 residues: Protoheme IX farnesyltransferase (298 aa).

Transmembrane regions (helical) follow at residues 26–46, 52–72, 93–113, 120–140, 148–168, 174–194, 219–239, 241–261, and 278–298; these read VVSLIVFTAVIGMFLSVPGAV, LLGTIGISLVAGAAAALNCLV, VSVPETLFFLVMVGGLGLFIL, LTMWLTLGTFVGYAIIYTVIL, IVIGGASGAMPPVLGWAAITG, ALLLFLIIFAWTPPHFWALAL, LHVLLYTIILCIATVLPYLTQ, SGLIYLVSVLILDAIFLYYAI, and YSIIYLALLFTALLVDHYFYF.

The protein belongs to the UbiA prenyltransferase family. Protoheme IX farnesyltransferase subfamily.

The protein resides in the cell inner membrane. The enzyme catalyses heme b + (2E,6E)-farnesyl diphosphate + H2O = Fe(II)-heme o + diphosphate. Its pathway is porphyrin-containing compound metabolism; heme O biosynthesis; heme O from protoheme: step 1/1. Functionally, converts heme B (protoheme IX) to heme O by substitution of the vinyl group on carbon 2 of heme B porphyrin ring with a hydroxyethyl farnesyl side group. This chain is Protoheme IX farnesyltransferase, found in Nitrosomonas eutropha (strain DSM 101675 / C91 / Nm57).